We begin with the raw amino-acid sequence, 271 residues long: DNA-directed RNA polymerase subunit Rpo3 (271 aa).

It belongs to the archaeal Rpo3/eukaryotic RPB3 RNA polymerase subunit family. As to quaternary structure, part of the RNA polymerase complex.

It is found in the cytoplasm. It catalyses the reaction RNA(n) + a ribonucleoside 5'-triphosphate = RNA(n+1) + diphosphate. DNA-dependent RNA polymerase (RNAP) catalyzes the transcription of DNA into RNA using the four ribonucleoside triphosphates as substrates. The chain is DNA-directed RNA polymerase subunit Rpo3 from Thermoplasma volcanium (strain ATCC 51530 / DSM 4299 / JCM 9571 / NBRC 15438 / GSS1).